Here is a 332-residue protein sequence, read N- to C-terminus: MSMLAERRRKQKWTVDPRNTAWSNDDSKFGQKMLEKMGWSKGKGLGAQEQGATEHIKVKVKNNHLGLGATNNNEDNWIAHQDDFNQLLAALNTCHGQETADSSDKKEKKSFSLEEKSKISKNRVHYMKFTKGKDLSSRSETDLDCIFGKRRNKKLAQDGCSNSSADEVNTSLTTTTTTTSAFTIQEYFAKRMAQLKNKPQASAPGSDLSETPVERKKGKKKNKEAADTDVENSPQHKAKRHKKKKRVEAERGPVAKKRDRAELQPGGPSEDECSDASVEAAEDCVQTPDIQDDVPKPKKRKAKKKLQRPEGVEIDATLDRAPVKKKKKKVSR.

Disordered regions lie at residues Met1 to Ser27 and Lys196 to Arg332. The G-patch domain maps to Asp26–Asn72. A Phosphoserine modification is found at Ser233. The span at His236–Arg246 shows a compositional bias: basic residues. The tract at residues Val254 to Lys328 is telomerase inhibitory domain (TID). Residues Ser269, Ser274, and Ser277 each carry the phosphoserine modification. The TBM motif lies at Gln291–Lys301. The span at Pro297–Leu306 shows a compositional bias: basic residues. The span at Gln307–Pro322 shows a compositional bias: basic and acidic residues. The segment covering Val323–Arg332 has biased composition (basic residues).

Belongs to the PINX1 family. In terms of assembly, interacts with MCRS1, TERT, TERF1, NCL/nucleolin, and the telomerase RNA.

The protein localises to the nucleus. Its subcellular location is the nucleolus. It is found in the chromosome. It localises to the telomere. The protein resides in the centromere. The protein localises to the kinetochore. Functionally, microtubule-binding protein essential for faithful chromosome segregation. Mediates TRF1 and TERT accumulation in nucleolus and enhances TRF1 binding to telomeres. Inhibits telomerase activity. May inhibit cell proliferation and act as tumor suppressor. In Mus musculus (Mouse), this protein is PIN2/TERF1-interacting telomerase inhibitor 1 (Pinx1).